We begin with the raw amino-acid sequence, 148 residues long: uncharacterized protein (148 aa).

The HTH asnC-type domain maps to 4–65 (LDRVDMQLVK…IPDIDKLGYM (62 aa)). Positions 23 to 42 (YRELADILNTTRQRIARRID) form a DNA-binding region, H-T-H motif.

This is an uncharacterized protein from Pyrococcus horikoshii (strain ATCC 700860 / DSM 12428 / JCM 9974 / NBRC 100139 / OT-3).